A 211-amino-acid polypeptide reads, in one-letter code: Ribonuclease P protein component 3 (211 aa).

Belongs to the eukaryotic/archaeal RNase P protein component 3 family. As to quaternary structure, consists of a catalytic RNA component and at least 4-5 protein subunits.

The protein resides in the cytoplasm. The enzyme catalyses Endonucleolytic cleavage of RNA, removing 5'-extranucleotides from tRNA precursor.. Functionally, part of ribonuclease P, a protein complex that generates mature tRNA molecules by cleaving their 5'-ends. The sequence is that of Ribonuclease P protein component 3 from Aeropyrum pernix (strain ATCC 700893 / DSM 11879 / JCM 9820 / NBRC 100138 / K1).